A 370-amino-acid polypeptide reads, in one-letter code: tRNA/tmRNA (uracil-C(5))-methyltransferase (370 aa).

The S-adenosyl-L-methionine site is built by Q195, Y221, N226, E242, and D302. The Nucleophile role is filled by C327. The active-site Proton acceptor is the E361.

This sequence belongs to the class I-like SAM-binding methyltransferase superfamily. RNA M5U methyltransferase family. TrmA subfamily.

It carries out the reaction uridine(54) in tRNA + S-adenosyl-L-methionine = 5-methyluridine(54) in tRNA + S-adenosyl-L-homocysteine + H(+). The enzyme catalyses uridine(341) in tmRNA + S-adenosyl-L-methionine = 5-methyluridine(341) in tmRNA + S-adenosyl-L-homocysteine + H(+). In terms of biological role, dual-specificity methyltransferase that catalyzes the formation of 5-methyluridine at position 54 (m5U54) in all tRNAs, and that of position 341 (m5U341) in tmRNA (transfer-mRNA). The polypeptide is tRNA/tmRNA (uracil-C(5))-methyltransferase (Wolinella succinogenes (strain ATCC 29543 / DSM 1740 / CCUG 13145 / JCM 31913 / LMG 7466 / NCTC 11488 / FDC 602W) (Vibrio succinogenes)).